The chain runs to 121 residues: Small ribosomal subunit protein uS13 (121 aa).

The tract at residues 89-121 is disordered; sequence MRHRRGLPVRGQNTKNNARTRKGKKVSIAGKKK. Positions 106-121 are enriched in basic residues; that stretch reads ARTRKGKKVSIAGKKK.

Belongs to the universal ribosomal protein uS13 family. In terms of assembly, part of the 30S ribosomal subunit. Forms a loose heterodimer with protein S19. Forms two bridges to the 50S subunit in the 70S ribosome.

Located at the top of the head of the 30S subunit, it contacts several helices of the 16S rRNA. In the 70S ribosome it contacts the 23S rRNA (bridge B1a) and protein L5 of the 50S subunit (bridge B1b), connecting the 2 subunits; these bridges are implicated in subunit movement. Contacts the tRNAs in the A and P-sites. In Latilactobacillus sakei subsp. sakei (strain 23K) (Lactobacillus sakei subsp. sakei), this protein is Small ribosomal subunit protein uS13.